A 368-amino-acid polypeptide reads, in one-letter code: Phosphate acyltransferase (368 aa).

The tract at residues 335-368 is disordered; the sequence is VSLGDGEHDAGGAGPASPAAGHHAEPSAAQSSKA. Low complexity predominate over residues 349 to 368; that stretch reads PASPAAGHHAEPSAAQSSKA.

The protein belongs to the PlsX family. In terms of assembly, homodimer. Probably interacts with PlsY.

Its subcellular location is the cytoplasm. The catalysed reaction is a fatty acyl-[ACP] + phosphate = an acyl phosphate + holo-[ACP]. It functions in the pathway lipid metabolism; phospholipid metabolism. Functionally, catalyzes the reversible formation of acyl-phosphate (acyl-PO(4)) from acyl-[acyl-carrier-protein] (acyl-ACP). This enzyme utilizes acyl-ACP as fatty acyl donor, but not acyl-CoA. This chain is Phosphate acyltransferase, found in Burkholderia multivorans (strain ATCC 17616 / 249).